Consider the following 714-residue polypeptide: Fatty acid oxidation complex subunit alpha (714 aa).

The segment at 1 to 190 (MEMASAFTLN…KLGLVDDVVP (190 aa)) is enoyl-CoA hydratase. The tract at residues 306–714 (APLNSVGILG…FWKTTATDLQ (409 aa)) is 3-hydroxyacyl-CoA dehydrogenase.

It in the N-terminal section; belongs to the enoyl-CoA hydratase/isomerase family. This sequence in the central section; belongs to the 3-hydroxyacyl-CoA dehydrogenase family. As to quaternary structure, heterotetramer of two alpha chains (FadJ) and two beta chains (FadI).

Its subcellular location is the cytoplasm. The catalysed reaction is a (3S)-3-hydroxyacyl-CoA = a (2E)-enoyl-CoA + H2O. It catalyses the reaction a 4-saturated-(3S)-3-hydroxyacyl-CoA = a (3E)-enoyl-CoA + H2O. The enzyme catalyses a (3S)-3-hydroxyacyl-CoA + NAD(+) = a 3-oxoacyl-CoA + NADH + H(+). It carries out the reaction (3S)-3-hydroxybutanoyl-CoA = (3R)-3-hydroxybutanoyl-CoA. It participates in lipid metabolism; fatty acid beta-oxidation. In terms of biological role, catalyzes the formation of a hydroxyacyl-CoA by addition of water on enoyl-CoA. Also exhibits 3-hydroxyacyl-CoA epimerase and 3-hydroxyacyl-CoA dehydrogenase activities. This is Fatty acid oxidation complex subunit alpha from Escherichia coli O6:K15:H31 (strain 536 / UPEC).